The chain runs to 158 residues: NADH-quinone oxidoreductase subunit B (158 aa).

[4Fe-4S] cluster-binding residues include C37, C38, C102, and C132.

The protein belongs to the complex I 20 kDa subunit family. NDH-1 is composed of 14 different subunits. Subunits NuoB, C, D, E, F, and G constitute the peripheral sector of the complex. It depends on [4Fe-4S] cluster as a cofactor.

The protein localises to the cell inner membrane. The catalysed reaction is a quinone + NADH + 5 H(+)(in) = a quinol + NAD(+) + 4 H(+)(out). In terms of biological role, NDH-1 shuttles electrons from NADH, via FMN and iron-sulfur (Fe-S) centers, to quinones in the respiratory chain. Couples the redox reaction to proton translocation (for every two electrons transferred, four hydrogen ions are translocated across the cytoplasmic membrane), and thus conserves the redox energy in a proton gradient. The chain is NADH-quinone oxidoreductase subunit B from Methylobacillus flagellatus (strain ATCC 51484 / DSM 6875 / VKM B-1610 / KT).